We begin with the raw amino-acid sequence, 272 residues long: Phosphate import ATP-binding protein PstB (272 aa).

The ABC transporter domain occupies 26–267; the sequence is IVVKNWNLYY…PQVKRTEDYI (242 aa). 58-65 contributes to the ATP binding site; the sequence is GPSGCGKS.

Belongs to the ABC transporter superfamily. Phosphate importer (TC 3.A.1.7) family. The complex is composed of two ATP-binding proteins (PstB), two transmembrane proteins (PstC and PstA) and a solute-binding protein (PstS).

The protein resides in the cell inner membrane. It carries out the reaction phosphate(out) + ATP + H2O = ADP + 2 phosphate(in) + H(+). Its function is as follows. Part of the ABC transporter complex PstSACB involved in phosphate import. Responsible for energy coupling to the transport system. This chain is Phosphate import ATP-binding protein PstB, found in Hydrogenovibrio crunogenus (strain DSM 25203 / XCL-2) (Thiomicrospira crunogena).